Consider the following 148-residue polypeptide: MKIILTVLAGVGLLSAGGCGMLDQVNDGLNYTSEAAGYVEKVKTFAEEAPELAEKAVNDTEAKEKLEAQLESIQKAAADFNELTPPDAAAEIHRTIQEHNETLQKSAEDVLKQAEEGKVSLKELEQSDLVQNAKQITDVMGQIEKLGE.

The first 18 residues, Met1–Gly18, serve as a signal peptide directing secretion. Residue Cys19 is the site of N-palmitoyl cysteine attachment. Cys19 is lipidated: S-diacylglycerol cysteine.

The protein localises to the cell membrane. This is an uncharacterized protein from Bacillus subtilis (strain 168).